The chain runs to 290 residues: Porphobilinogen deaminase (290 aa).

At C237 the chain carries S-(dipyrrolylmethanemethyl)cysteine.

It belongs to the HMBS family. In terms of assembly, monomer. Requires dipyrromethane as cofactor.

It catalyses the reaction 4 porphobilinogen + H2O = hydroxymethylbilane + 4 NH4(+). The protein operates within porphyrin-containing compound metabolism; protoporphyrin-IX biosynthesis; coproporphyrinogen-III from 5-aminolevulinate: step 2/4. Tetrapolymerization of the monopyrrole PBG into the hydroxymethylbilane pre-uroporphyrinogen in several discrete steps. This Clostridium botulinum (strain Langeland / NCTC 10281 / Type F) protein is Porphobilinogen deaminase.